Here is a 465-residue protein sequence, read N- to C-terminus: Alpha-2A adrenergic receptor (465 aa).

Residues 1–48 lie on the Extracellular side of the membrane; it reads MFRQEQPLAEGSFAPMGSLQPDAGNSSWNGTEAPGGGTRATPYSLQVT. N-linked (GlcNAc...) asparagine glycosylation is found at Asn-25 and Asn-29. The helical transmembrane segment at 49-74 threads the bilayer; the sequence is LTLVCLAGLLMLFTVFGNVLVIIAVF. At 75–85 the chain is on the cytoplasmic side; the sequence is TSRALKAPQNL. Residues 86 to 111 traverse the membrane as a helical segment; it reads FLVSLASADILVATLVIPFSLANEVM. Residues 112–121 are Extracellular-facing; sequence GYWYFGKVWC. A disulfide bond links Cys-121 and Cys-203. The chain crosses the membrane as a helical span at residues 122–144; sequence EIYLALDVLFCTSSIVHLCAISL. The Cytoplasmic portion of the chain corresponds to 145 to 164; the sequence is DRYWSITQAIEYNLKRTPRR. The chain crosses the membrane as a helical span at residues 165–188; it reads IKAIIVTVWVISAVISFPPLISIE. At 189 to 207 the chain is on the extracellular side; the sequence is KKGAGGGQQPAEPSCKIND. Residues 208–232 traverse the membrane as a helical segment; that stretch reads QKWYVISSSIGSFFAPCLIMILVYV. Over 233 to 389 the chain is Cytoplasmic; sequence RIYQIAKRRT…RQNREKRFTF (157 aa). A disordered region spans residues 242–378; that stretch reads TRVPPSRRGP…GGGAKASRWR (137 aa). Positions 313–330 are enriched in basic and acidic residues; the sequence is SSEHAERPPGPRRPDRGP. A Phosphoserine modification is found at Ser-346. Over residues 353 to 363 the composition is skewed to gly residues; that stretch reads GAAGPGASGSG. Omega-N-methylarginine is present on Arg-368. Residues 390-414 form a helical membrane-spanning segment; the sequence is VLAVVIGVFVVCWFPFFFTYTLIAV. Over 415 to 424 the chain is Extracellular; sequence GCPVPSQLFN. The helical transmembrane segment at 425–445 threads the bilayer; sequence FFFWFGYCNSSLNPVIYTIFN. Residues 446 to 465 are Cytoplasmic-facing; the sequence is HDFRRAFKKILCRGDRKRIV. The S-palmitoyl cysteine moiety is linked to residue Cys-457.

The protein belongs to the G-protein coupled receptor 1 family. Adrenergic receptor subfamily. ADRA2A sub-subfamily.

The protein localises to the cell membrane. Its function is as follows. Alpha-2 adrenergic receptors mediate the catecholamine-induced inhibition of adenylate cyclase through the action of G proteins. This chain is Alpha-2A adrenergic receptor, found in Mus musculus (Mouse).